A 287-amino-acid polypeptide reads, in one-letter code: Aromatic amino acid exporter YddG (287 aa).

Over 1–5 (MSRSS) the chain is Cytoplasmic. The helical transmembrane segment at 6–24 (ATLIGFTAILLWSTLALAT) threads the bilayer. The EamA 1 domain maps to 7–136 (TLIGFTAILL…MGLAGTVVLL (130 aa)). Topologically, residues 25-31 (SSTGAVP) are periplasmic. A helical membrane pass occupies residues 32 to 54 (PFLLTALTFTIGGAVGIAAGLAR). Topologically, residues 55–65 (GVGLSVLRQPW) are cytoplasmic. Residues 66 to 86 (PVWVHGIGGLFGYHFFYFSAL) form a helical membrane-spanning segment. Over 87–90 (KLAP) the chain is Periplasmic. Residues 91–111 (PAEAGLVAYLWPLLIVLFSAF) form a helical membrane-spanning segment. Topologically, residues 112–118 (LPGERLR) are cytoplasmic. A helical transmembrane segment spans residues 119–139 (PAHVAGALMGLAGTVVLLGAR). Residues 140 to 149 (AGGFGFAPEY) are Periplasmic-facing. Residues 150–170 (VPGYLAAAACAVIWSVYSVAS) form a helical membrane-spanning segment. In terms of domain architecture, EamA 2 spans 151–281 (PGYLAAAACA…ALIVGGAAVA (131 aa)). Residues 171-176 (RRFARV) lie on the Cytoplasmic side of the membrane. Residues 177–198 (PTEVVAGFCLATAALSALCHIL) traverse the membrane as a helical segment. Residues 199–208 (FEPSVWPVGS) are Periplasmic-facing. A helical transmembrane segment spans residues 209-233 (EWLAVVALGIGPVGIAFYTWDIGMK). Over 234–236 (RGD) the chain is Cytoplasmic. A helical transmembrane segment spans residues 237 to 258 (VRLLGVLSYAAPVLSTLLLVVA). Topologically, residues 259-264 (GFAAPS) are periplasmic. The helical transmembrane segment at 265-284 (GALAIACALIVGGAAVATLL) threads the bilayer. The Cytoplasmic portion of the chain corresponds to 285–287 (ARR).

The protein belongs to the drug/metabolite transporter (DMT) superfamily. Aromatic amino acid/paraquat exporter (ArAA/P-E) (TC 2.A.7.17) family.

The protein localises to the cell inner membrane. It catalyses the reaction L-threonine(in) = L-threonine(out). It carries out the reaction L-methionine(in) = L-methionine(out). The catalysed reaction is L-lysine(in) = L-lysine(out). The enzyme catalyses L-glutamate(out) = L-glutamate(in). Its function is as follows. Amino acid transporter with broad substrate specificity. Can transport various amino acids, including L-threonine, L-methionine, L-lysine and L-glutamate. The chain is Aromatic amino acid exporter YddG from Ancylobacter novellus (strain ATCC 8093 / DSM 506 / JCM 20403 / CCM 1077 / IAM 12100 / NBRC 12443 / NCIMB 10456) (Starkeya novella).